The primary structure comprises 467 residues: H(+)/Cl(-) exchange transporter ClcA (467 aa).

The Cytoplasmic segment spans residues 1–30; sequence MKSQTIPTRRVRGFRRAAVIRQLLSRDKTP. A helical transmembrane segment spans residues 31–67; the sequence is LTILLLASLTGVLAGLAGVAFEKAVAWVTAHRIEGLA. The Periplasmic segment spans residues 68–74; that stretch reads QVAHIPW. A helical membrane pass occupies residues 75-98; the sequence is LVWLLAFLFSALLAMVGYFLVRRF. The Cytoplasmic portion of the chain corresponds to 99 to 106; that stretch reads APEAGGSG. Positions 104–108 match the Selectivity filter part_1 motif; it reads GSGIP. Serine 105 lines the chloride pocket. Residues 107–114 constitute an intramembrane region (helical); the sequence is IPEIEGAL. Over 115-121 the chain is Cytoplasmic; sequence EELRPVR. The helical transmembrane segment at 122–139 threads the bilayer; sequence WWRVLPVKFFGGMGTLGA. Residues 140 to 145 are Periplasmic-facing; it reads GMVLGR. The short motif at 144–148 is the Selectivity filter part_2 element; the sequence is GREGP. A helical transmembrane segment spans residues 146–164; sequence EGPMVQMGGNIGRMVLDIF. At 165–174 the chain is on the cytoplasmic side; that stretch reads HRPDAEARHT. Intramembrane regions (helical) lie at residues 175–187 and 191–199; these read LLAT…LAAA and PLAGILFII. Residues 200–212 are Cytoplasmic-facing; the sequence is EEMRTQFHYNLIS. A helical membrane pass occupies residues 213-230; sequence IKAVFTGVIMSTIVFRIF. The Periplasmic portion of the chain corresponds to 231-250; the sequence is NGEKSVIEVGQLTDAPVYTL. The chain crosses the membrane as a helical span at residues 251–279; sequence WLYLLLGIIFGAVGPLFNRLVLGMQDVFA. Residues 280-285 lie on the Cytoplasmic side of the membrane; it reads RIHGGN. A helical transmembrane segment spans residues 286–307; that stretch reads TTRWVLLGGAIGGACGLLALWE. Over 308 to 327 the chain is Periplasmic; that stretch reads PAAAGGGFGLIPIAAAGNFT. The helical transmembrane segment at 328–347 threads the bilayer; it reads VGMLLFIFIARVVTTVFCFS. The Cytoplasmic portion of the chain corresponds to 348 to 352; sequence SGAPG. A Selectivity filter part_3 motif is present at residues 353–357; that stretch reads GIFAP. A helical membrane pass occupies residues 353–374; the sequence is GIFAPMLALGTLLGSAFGMACA. Residues isoleucine 354 and phenylalanine 355 each contribute to the chloride site. The Periplasmic portion of the chain corresponds to 375–384; it reads AWFPQWHLQA. Positions 385–399 form an intramembrane region, helical; the sequence is GTFAIAGMGALLAAS. The segment at residues 400 to 402 is an intramembrane region (note=Loop between two helices); the sequence is VRA. An intramembrane region (helical) is located at residues 403–414; sequence PITGIVLVLEMT. Residues 415-419 constitute an intramembrane region (note=Loop between two helices); sequence DNYQL. A helical membrane pass occupies residues 420-436; sequence ILPMIITCLGATLLAQF. Over 437–467 the chain is Cytoplasmic; it reads LGGKPLYSTILARTLAKQEAERQAQADGRNT. Tyrosine 443 is a chloride binding site.

This sequence belongs to the chloride channel (TC 2.A.49) family. ClcA subfamily. Homodimer.

It localises to the cell inner membrane. The enzyme catalyses 2 chloride(in) + H(+)(out) = 2 chloride(out) + H(+)(in). In terms of biological role, proton-coupled chloride transporter. Functions as antiport system and exchanges two chloride ions for 1 proton. Probably acts as an electrical shunt for an outwardly-directed proton pump that is linked to amino acid decarboxylation, as part of the extreme acid resistance (XAR) response. This is H(+)/Cl(-) exchange transporter ClcA from Cronobacter sakazakii (strain ATCC BAA-894) (Enterobacter sakazakii).